Reading from the N-terminus, the 523-residue chain is Probable malate:quinone oxidoreductase 1 (523 aa).

The protein belongs to the MQO family. FAD serves as cofactor.

The enzyme catalyses (S)-malate + a quinone = a quinol + oxaloacetate. It participates in carbohydrate metabolism; tricarboxylic acid cycle; oxaloacetate from (S)-malate (quinone route): step 1/1. In Pseudomonas aeruginosa (strain ATCC 15692 / DSM 22644 / CIP 104116 / JCM 14847 / LMG 12228 / 1C / PRS 101 / PAO1), this protein is Probable malate:quinone oxidoreductase 1.